A 161-amino-acid chain; its full sequence is Urease accessory protein UreE (161 aa).

The interval 138–161 is disordered; sequence RGAYHAHGGHSHDHGQGHHHHDHG.

It belongs to the UreE family.

It is found in the cytoplasm. Functionally, involved in urease metallocenter assembly. Binds nickel. Probably functions as a nickel donor during metallocenter assembly. This Agrobacterium fabrum (strain C58 / ATCC 33970) (Agrobacterium tumefaciens (strain C58)) protein is Urease accessory protein UreE.